A 294-amino-acid polypeptide reads, in one-letter code: Phenylalanine-4-hydroxylase (294 aa).

Residues 1–20 (MSGDGLSNGPPPGARPDWTI) are disordered. Positions 129, 134, and 175 each coordinate Fe cation.

It belongs to the biopterin-dependent aromatic amino acid hydroxylase family. Fe(2+) serves as cofactor.

It carries out the reaction (6R)-L-erythro-5,6,7,8-tetrahydrobiopterin + L-phenylalanine + O2 = (4aS,6R)-4a-hydroxy-L-erythro-5,6,7,8-tetrahydrobiopterin + L-tyrosine. It functions in the pathway amino-acid degradation; L-phenylalanine degradation; acetoacetate and fumarate from L-phenylalanine: step 1/6. This Caulobacter vibrioides (strain ATCC 19089 / CIP 103742 / CB 15) (Caulobacter crescentus) protein is Phenylalanine-4-hydroxylase (phhA).